Reading from the N-terminus, the 163-residue chain is Single-stranded DNA-binding protein 2 (163 aa).

Residues 1–104 (MINNVVLVGR…VVADNFQMLE (104 aa)) form the SSB domain. The disordered stretch occupies residues 109–163 (REGGSTGSFNGGFNNNTSSSNSYSAPAQQTPNFGRDDSPFGNSNPMDISDDDLPF). Over residues 119–130 (GGFNNNTSSSNS) the composition is skewed to low complexity. Residues 131-140 (YSAPAQQTPN) are compositionally biased toward polar residues. The Important for interaction with partner proteins motif lies at 158–163 (DDDLPF).

In terms of assembly, homotetramer.

Plays an important role in DNA replication, recombination and repair. Binds to ssDNA and to an array of partner proteins to recruit them to their sites of action during DNA metabolism. The protein is Single-stranded DNA-binding protein 2 (ssb2) of Streptococcus pyogenes serotype M6 (strain ATCC BAA-946 / MGAS10394).